We begin with the raw amino-acid sequence, 310 residues long: MERDFLGLGSKLSPITVKEETNEDSAPSRGMMDWSFSSKVGSGPQFLSFGTSQQETRVNTVNDHLLSSAAMDQNQRTYFSSLQEDRVFPGSSQQDQTTITVSMSEPNYINSFINHQHLGGSPIMAPPVSVFPAPTTIRSSSKPLPPQLTIFYAGSVLVYQDIAPEKAQAIMLLAGNGPHAKPVSQPKPQKLVHHSLPTTDPPTMPPSFLPSISYIVSETRSSGSNGVTGLGPTKTKASLASTRNNQTAAFSMAPTVGLPQTRKASLARFLEKRKERVINVSPYYVDNKSSIDCRTLMSECVSCPPAHHLH.

The Tify domain maps to S141–N176. Residues P259–Y284 carry the Jas motif. The Nuclear localization signal signature appears at T261–R268.

This sequence belongs to the TIFY/JAZ family. As to quaternary structure, homo- and heterodimer. Interacts with MYC2, AFPH2/NINJA, TIFY10A/JAZ1, TIFY6B/JAZ3, TIFY5A/JAZ8, TIFY9/JAZ10 and TIFY3A/JAZ11. Interacts with RHD6 and RSL1. In terms of processing, ubiquitinated. Targeted for degradation by the SCF(COI1) E3 ubiquitin ligase-proteasome pathway during jasmonate signaling.

It is found in the nucleus. Repressor of jasmonate responses. Interacts with and suppresses RHD6 and RSL1 transcription factor activities to negatively regulate jasmonate-stimulated root hair development. This Arabidopsis thaliana (Mouse-ear cress) protein is Protein TIFY 6A (TIFY6A).